The chain runs to 166 residues: Endoribonuclease YbeY (166 aa).

Residues His-126, His-130, and His-136 each contribute to the Zn(2+) site.

Belongs to the endoribonuclease YbeY family. It depends on Zn(2+) as a cofactor.

It localises to the cytoplasm. Single strand-specific metallo-endoribonuclease involved in late-stage 70S ribosome quality control and in maturation of the 3' terminus of the 16S rRNA. This Laribacter hongkongensis (strain HLHK9) protein is Endoribonuclease YbeY.